We begin with the raw amino-acid sequence, 896 residues long: Translation initiation factor IF-2 (896 aa).

The disordered stretch occupies residues 1–260 (MDIENTNKPD…AQTNKKAHKA (260 aa)). Basic and acidic residues predominate over residues 19–34 (KAADSKPESGKTDSKR). Residues 56–66 (EESSGGKASGK) are compositionally biased toward low complexity. The span at 85–136 (SVKEKKPDERLEETKKTAPRFEDKKSDAPSAQNEKRSFDSAKKEEKQTERKK) shows a compositional bias: basic and acidic residues. The span at 168–177 (RGQGNRPQRP) shows a compositional bias: low complexity. Positions 375 to 544 (PRPPVVTIMG…LLQAEVLELK (170 aa)) constitute a tr-type G domain. Residues 384 to 391 (GHVDHGKT) form a G1 region. 384 to 391 (GHVDHGKT) lines the GTP pocket. Positions 409–413 (GITQH) are G2. A G3 region spans residues 430 to 433 (DTPG). Residues 430-434 (DTPGH) and 484-487 (NKVD) contribute to the GTP site. The interval 484–487 (NKVD) is G4. The tract at residues 520–522 (SAL) is G5. Residues 877-896 (SDSEKYKAPEIKEEGTETDE) are disordered.

Belongs to the TRAFAC class translation factor GTPase superfamily. Classic translation factor GTPase family. IF-2 subfamily.

Its subcellular location is the cytoplasm. One of the essential components for the initiation of protein synthesis. Protects formylmethionyl-tRNA from spontaneous hydrolysis and promotes its binding to the 30S ribosomal subunits. Also involved in the hydrolysis of GTP during the formation of the 70S ribosomal complex. The chain is Translation initiation factor IF-2 from Treponema denticola (strain ATCC 35405 / DSM 14222 / CIP 103919 / JCM 8153 / KCTC 15104).